A 384-amino-acid polypeptide reads, in one-letter code: S-adenosylmethionine synthase (384 aa).

His15 is an ATP binding site. Asp17 is a binding site for Mg(2+). Glu43 contributes to the K(+) binding site. Residues Glu56 and Gln99 each coordinate L-methionine. The tract at residues 99-109 is flexible loop; the sequence is QSPDINQGVDR. ATP-binding positions include 164–166, 230–231, Asp239, 245–246, Ala262, and Lys266; these read DAK, RF, and RK. Asp239 is an L-methionine binding site. Lys270 is an L-methionine binding site.

The protein belongs to the AdoMet synthase family. As to quaternary structure, homotetramer; dimer of dimers. It depends on Mg(2+) as a cofactor. K(+) is required as a cofactor.

It localises to the cytoplasm. It carries out the reaction L-methionine + ATP + H2O = S-adenosyl-L-methionine + phosphate + diphosphate. It participates in amino-acid biosynthesis; S-adenosyl-L-methionine biosynthesis; S-adenosyl-L-methionine from L-methionine: step 1/1. Functionally, catalyzes the formation of S-adenosylmethionine (AdoMet) from methionine and ATP. The overall synthetic reaction is composed of two sequential steps, AdoMet formation and the subsequent tripolyphosphate hydrolysis which occurs prior to release of AdoMet from the enzyme. This is S-adenosylmethionine synthase from Yersinia pseudotuberculosis serotype IB (strain PB1/+).